We begin with the raw amino-acid sequence, 485 residues long: MQLYNTLTRKKEHFEPAVPGKVNMYVCGITAYDLCHIGHARSAVVFDVLVRYLRHTGLDVTFARNFTDVDDKIITRANQEGLTSQEVAEKYIATFYEDMDRLNVLRADLEPRATTHIEEMISLCVRLIEQDKAYATPSGDVYFRVRAFPGYGKLSGRDVDDLRSGARVAPGEEKEDPLDFALWKAAKPGEPFWESPWGNGRPGWHIECSAMSEKHLPLPLDIHGGGQDLVFPHHENEIAQTEAALGKDFVRYWVHNGFVQVNAEKMSKSLGNFRTIRDILENYLPETLRYFLLTKHYRSPIDFTFESMDEAEKNLKRIYEALGLLHAELEREKWTSGPLPKDVTEEFEGLRQAFADAMEDDMNTAAALGHVFTMVRLANRILDNKGQRKTEGARAFFRAVLDEAATWFAVLGVFGREPAGFLAELRACRVARKGIDPAKVEELLQARINARADKDFARADAIRDEIAALGIEVRDTPSGAVWDVL.

Cys-27 serves as a coordination point for Zn(2+). The short motif at 29 to 39 (ITAYDLCHIGH) is the 'HIGH' region element. Zn(2+) contacts are provided by Cys-208, His-233, and Glu-237. Positions 265 to 269 (KMSKS) match the 'KMSKS' region motif. Residue Lys-268 participates in ATP binding.

Belongs to the class-I aminoacyl-tRNA synthetase family. Monomer. It depends on Zn(2+) as a cofactor.

The protein localises to the cytoplasm. The catalysed reaction is tRNA(Cys) + L-cysteine + ATP = L-cysteinyl-tRNA(Cys) + AMP + diphosphate. In Nitratidesulfovibrio vulgaris (strain DSM 19637 / Miyazaki F) (Desulfovibrio vulgaris), this protein is Cysteine--tRNA ligase.